Consider the following 491-residue polypeptide: F-box/LRR-repeat protein 7 (491 aa).

The tract at residues 1 to 79 (MGANNGKQYG…GRGSSTSSSS (79 aa)) is disordered. Over residues 10–26 (GSEGKGSSSISSDVSSS) the composition is skewed to low complexity. Positions 27–55 (TDHTPTKAQKNVATSEDSDLSMRTLSTPS) are enriched in polar residues. Residues 111 to 157 (QASIDRLPDHSMVQIFSFLPTNQLCRCARVCRRWYNLAWDPRLWRTI) enclose the F-box domain. LRR repeat units follow at residues 170–195 (LKVLTRRLCQDTPNVCLMLETVTVSG), 196–221 (CRRLTDRGLYTIAQCCPELRRLEVSG), 222–247 (CYNISNEAVFDVVSLCPNLEHLDVSG), 253–281 (CISLTREASIKLSPLHGKQISIRYLDMTD), 282–307 (CFVLEDEGLHTIAAHCTQLTHLYLRR), 308–333 (CVRLTDEGLRYLVIYCASIKELSVSD), 334–359 (CRFVSDFGLREIAKLESRLRYLSIAH), 360–385 (CGRVTDVGIRYVAKYCSKLRYLNARG), 386–411 (CEGITDHGVEYLAKNCTKLKSLDIGK), 412–437 (CPLVSDTGLECLALNCFNLKRLSLKS), and 438–463 (CESITGQGLQIVAANCFDLQTLNVQD).

The protein belongs to the FBXL7 family. As to quaternary structure, part of the SCF (SKP1-CUL1-F-box) E3 ubiquitin-protein ligase complex SCF(FBXL7) composed of CUL1, SKP1, RBX1 and FBXL7. Interacts with AURKA; interaction takes place during mitosis but not in interphase. Interacts with BIRC5; this interaction allows BIRC5 to be polyubiquitinated by the SCF(FBXL7) E3 ubiquitin-protein ligase complex.

The protein localises to the cytoplasm. Its subcellular location is the cytoskeleton. The protein resides in the microtubule organizing center. It localises to the centrosome. Its pathway is protein modification; protein ubiquitination. Substrate recognition component of a SCF (SKP1-CUL1-F-box protein) E3 ubiquitin-protein ligase complex. During mitosis, it mediates the ubiquitination and subsequent proteasomal degradation of AURKA, causing mitotic arrest. It also regulates mitochondrial function by mediating the ubiquitination and proteasomal degradation of the apoptosis inhibitor BIRC5. This Homo sapiens (Human) protein is F-box/LRR-repeat protein 7 (FBXL7).